Here is a 121-residue protein sequence, read N- to C-terminus: Small ribosomal subunit protein uS13 (121 aa).

A disordered region spans residues 94–121 (GLPLRGQRTRTNARTRKGPRKAGVALKK).

Belongs to the universal ribosomal protein uS13 family. In terms of assembly, part of the 30S ribosomal subunit. Forms a loose heterodimer with protein S19. Forms two bridges to the 50S subunit in the 70S ribosome.

In terms of biological role, located at the top of the head of the 30S subunit, it contacts several helices of the 16S rRNA. In the 70S ribosome it contacts the 23S rRNA (bridge B1a) and protein L5 of the 50S subunit (bridge B1b), connecting the 2 subunits; these bridges are implicated in subunit movement. Contacts the tRNAs in the A and P-sites. In Ralstonia nicotianae (strain ATCC BAA-1114 / GMI1000) (Ralstonia solanacearum), this protein is Small ribosomal subunit protein uS13.